The following is a 405-amino-acid chain: L-rhamnonate dehydratase (405 aa).

Residues His33 and Arg59 each contribute to the substrate site. Mg(2+) contacts are provided by Asp226, Glu252, and Glu280. The Proton acceptor role is filled by His329. Glu349 provides a ligand contact to substrate.

This sequence belongs to the mandelate racemase/muconate lactonizing enzyme family. RhamD subfamily. In terms of assembly, homooctamer; tetramer of dimers. It depends on Mg(2+) as a cofactor.

It carries out the reaction L-rhamnonate = 2-dehydro-3-deoxy-L-rhamnonate + H2O. Its function is as follows. Catalyzes the dehydration of L-rhamnonate to 2-keto-3-deoxy-L-rhamnonate (KDR). This chain is L-rhamnonate dehydratase, found in Escherichia coli O81 (strain ED1a).